The sequence spans 562 residues: Dihydroxy-acid dehydratase (562 aa).

A Mg(2+)-binding site is contributed by D78. A [2Fe-2S] cluster-binding site is contributed by C119. Residues D120 and K121 each coordinate Mg(2+). Position 121 is an N6-carboxylysine (K121). C192 provides a ligand contact to [2Fe-2S] cluster. E450 serves as a coordination point for Mg(2+). The active-site Proton acceptor is S476.

Belongs to the IlvD/Edd family. In terms of assembly, homodimer. [2Fe-2S] cluster is required as a cofactor. Mg(2+) serves as cofactor.

The catalysed reaction is (2R)-2,3-dihydroxy-3-methylbutanoate = 3-methyl-2-oxobutanoate + H2O. It catalyses the reaction (2R,3R)-2,3-dihydroxy-3-methylpentanoate = (S)-3-methyl-2-oxopentanoate + H2O. The protein operates within amino-acid biosynthesis; L-isoleucine biosynthesis; L-isoleucine from 2-oxobutanoate: step 3/4. It functions in the pathway amino-acid biosynthesis; L-valine biosynthesis; L-valine from pyruvate: step 3/4. Functions in the biosynthesis of branched-chain amino acids. Catalyzes the dehydration of (2R,3R)-2,3-dihydroxy-3-methylpentanoate (2,3-dihydroxy-3-methylvalerate) into 2-oxo-3-methylpentanoate (2-oxo-3-methylvalerate) and of (2R)-2,3-dihydroxy-3-methylbutanoate (2,3-dihydroxyisovalerate) into 2-oxo-3-methylbutanoate (2-oxoisovalerate), the penultimate precursor to L-isoleucine and L-valine, respectively. The chain is Dihydroxy-acid dehydratase from Nautilia profundicola (strain ATCC BAA-1463 / DSM 18972 / AmH).